A 142-amino-acid polypeptide reads, in one-letter code: Small ribosomal subunit protein uS12y (142 aa).

Pro-61 is modified (hydroxyproline).

The protein belongs to the universal ribosomal protein uS12 family.

The chain is Small ribosomal subunit protein uS12y (RPS23B) from Arabidopsis thaliana (Mouse-ear cress).